We begin with the raw amino-acid sequence, 158 residues long: C-type lectin galactose-binding isoform (158 aa).

Residues 1–20 (MGRFLLVTLSLLVVAFSLNG) form the signal peptide. 3 disulfides stabilise this stretch: Cys-26–Cys-37, Cys-54–Cys-154, and Cys-129–Cys-146. The region spanning 33–155 (KNGYCYKVFK…CTALRPFLCQ (123 aa)) is the C-type lectin domain. Ca(2+) is bound by residues Gln-119, Asp-121, Glu-127, Asn-142, and Asp-143. Positions 119–121 (QPD) match the Galactose-binding motif.

This sequence belongs to the true venom lectin family. Homodimer; disulfide-linked. Expressed by the venom gland.

The protein localises to the secreted. Its function is as follows. Galactose-binding lectin that binds to and agglutinates erythrocytes in a calcium-dependent manner. The protein is C-type lectin galactose-binding isoform of Hoplocephalus stephensii (Stephens's banded snake).